The following is a 438-amino-acid chain: ATP-dependent RNA helicase RhlB (438 aa).

Positions 9-37 (QRFADLPLHPEVKQALAENGFEFCTPIQA) match the Q motif motif. The Helicase ATP-binding domain maps to 40-219 (LPVLLQSKDI…YDHMNEPVKV (180 aa)). An ATP-binding site is contributed by 53–60 (AQTGTGKT). The short motif at 165-168 (DEAD) is the DEAD box element. A Helicase C-terminal domain is found at 243 to 390 (KMRLLLTLIE…VSNYDSEALL (148 aa)). The interval 395–438 (TPAKIHRKHPSGTRNLRDRSGASRPGAQRSGARPPRHDRTRRHS) is disordered. Residues 428 to 438 (PPRHDRTRRHS) show a composition bias toward basic residues.

Belongs to the DEAD box helicase family. RhlB subfamily. As to quaternary structure, component of the RNA degradosome, which is a multiprotein complex involved in RNA processing and mRNA degradation.

Its subcellular location is the cytoplasm. It catalyses the reaction ATP + H2O = ADP + phosphate + H(+). In terms of biological role, DEAD-box RNA helicase involved in RNA degradation. Has RNA-dependent ATPase activity and unwinds double-stranded RNA. The sequence is that of ATP-dependent RNA helicase RhlB from Shewanella baltica (strain OS185).